We begin with the raw amino-acid sequence, 278 residues long: 4-hydroxy-tetrahydrodipicolinate reductase (278 aa).

NAD(+) is bound by residues 13 to 18 and 111 to 113; these read GAAGKM and GTT. Histidine 167 functions as the Proton donor/acceptor in the catalytic mechanism. Position 168 (histidine 168) interacts with (S)-2,3,4,5-tetrahydrodipicolinate. Lysine 171 acts as the Proton donor in catalysis. Residue 177–178 coordinates (S)-2,3,4,5-tetrahydrodipicolinate; it reads GT.

Belongs to the DapB family.

It is found in the cytoplasm. It carries out the reaction (S)-2,3,4,5-tetrahydrodipicolinate + NAD(+) + H2O = (2S,4S)-4-hydroxy-2,3,4,5-tetrahydrodipicolinate + NADH + H(+). The catalysed reaction is (S)-2,3,4,5-tetrahydrodipicolinate + NADP(+) + H2O = (2S,4S)-4-hydroxy-2,3,4,5-tetrahydrodipicolinate + NADPH + H(+). It participates in amino-acid biosynthesis; L-lysine biosynthesis via DAP pathway; (S)-tetrahydrodipicolinate from L-aspartate: step 4/4. Its function is as follows. Catalyzes the conversion of 4-hydroxy-tetrahydrodipicolinate (HTPA) to tetrahydrodipicolinate. The polypeptide is 4-hydroxy-tetrahydrodipicolinate reductase (Nostoc sp. (strain PCC 7120 / SAG 25.82 / UTEX 2576)).